The chain runs to 573 residues: Excitatory amino acid transporter 2 (573 aa).

The span at 1–11 (MASTEGANNMP) shows a compositional bias: polar residues. Residues 1-29 (MASTEGANNMPKQVEVRMHDSHLSSEEPK) are disordered. Residues 1-44 (MASTEGANNMPKQVEVRMHDSHLSSEEPKHRNLGMRMCDKLGKN) lie on the Cytoplasmic side of the membrane. Serine 3, serine 21, serine 24, and serine 25 each carry phosphoserine. Residues 14 to 29 (VEVRMHDSHLSSEEPK) are compositionally biased toward basic and acidic residues. The S-palmitoyl cysteine moiety is linked to residue cysteine 38. 3 helical membrane-spanning segments follow: residues 45–64 (LLLS…GGLL), 88–108 (MLKM…LSGL), and 121–142 (MVYY…VLAI). Asparagine 205 and asparagine 215 each carry an N-linked (GlcNAc...) asparagine glycan. Transmembrane regions (helical) follow at residues 235–258 (FKDG…MGKM), 268–295 (FFNI…ACLI), and 317–338 (ITVI…YFVV). Positions 344–374 (FSFFAGIFQAWITALGTASSAGTLPVTFRCL) form an intramembrane region, discontinuously helical. 361–363 (ASS) lines the L-aspartate pocket. A helical transmembrane segment spans residues 384–410 (VTRFVLPVGATINMDGTALYEAVAAIF). Positions 392, 394, and 396 each coordinate Na(+). L-aspartate contacts are provided by residues threonine 400, 441 to 445 (IPSAG), aspartate 474, and asparagine 481. Positions 424 to 457 (IVTVSLTATLASIGAASIPSAGLVTMLLILTAVG) form an intramembrane region, discontinuously helical. A helical membrane pass occupies residues 471–492 (WLLDRMRTSVNVVGDSFGAGIV). The Na(+) site is built by asparagine 481 and aspartate 485. Phosphoserine occurs at positions 505, 520, 531, and 533. Tyrosine 538 is modified (phosphotyrosine). Residues serine 543, serine 559, and serine 563 each carry the phosphoserine modification.

It belongs to the dicarboxylate/amino acid:cation symporter (DAACS) (TC 2.A.23) family. SLC1A2 subfamily. As to quaternary structure, homotrimer. Interacts with AJUBA. In terms of processing, glycosylated. Post-translationally, palmitoylation at Cys-38 is not required for correct subcellular localization, but is important for glutamate uptake activity. In terms of tissue distribution, localized in brain and is highly enriched in the Purkinje cell layer in cerebellum.

It is found in the cell membrane. It carries out the reaction K(+)(in) + L-glutamate(out) + 3 Na(+)(out) + H(+)(out) = K(+)(out) + L-glutamate(in) + 3 Na(+)(in) + H(+)(in). The catalysed reaction is D-aspartate(out) + K(+)(in) + 3 Na(+)(out) + H(+)(out) = D-aspartate(in) + K(+)(out) + 3 Na(+)(in) + H(+)(in). It catalyses the reaction K(+)(in) + L-aspartate(out) + 3 Na(+)(out) + H(+)(out) = K(+)(out) + L-aspartate(in) + 3 Na(+)(in) + H(+)(in). Its function is as follows. Sodium-dependent, high-affinity amino acid transporter that mediates the uptake of L-glutamate and also L-aspartate and D-aspartate. Functions as a symporter that transports one amino acid molecule together with two or three Na(+) ions and one proton, in parallel with the counter-transport of one K(+) ion. Mediates Cl(-) flux that is not coupled to amino acid transport; this avoids the accumulation of negative charges due to aspartate and Na(+) symport. Essential for the rapid removal of released glutamate from the synaptic cleft, and for terminating the postsynaptic action of glutamate. The protein is Excitatory amino acid transporter 2 (Slc1a2) of Rattus norvegicus (Rat).